Here is a 61-residue protein sequence, read N- to C-terminus: Small ribosomal subunit protein uS14B (61 aa).

Positions 24, 27, 40, and 43 each coordinate Zn(2+).

This sequence belongs to the universal ribosomal protein uS14 family. Zinc-binding uS14 subfamily. In terms of assembly, part of the 30S ribosomal subunit. Contacts proteins S3 and S10. Requires Zn(2+) as cofactor.

Its function is as follows. Binds 16S rRNA, required for the assembly of 30S particles and may also be responsible for determining the conformation of the 16S rRNA at the A site. The sequence is that of Small ribosomal subunit protein uS14B from Kineococcus radiotolerans (strain ATCC BAA-149 / DSM 14245 / SRS30216).